We begin with the raw amino-acid sequence, 259 residues long: Cytochrome c oxidase subunit 3 (259 aa).

A run of 7 helical transmembrane segments spans residues 13-33 (PWPLTSSIGAFTLAIGLASWF), 36-56 (HGFLCLTLAAFLIIVSMIQWW), 80-100 (GMILFITSEVMFFLAFFWAFF), 125-145 (FSVPLLNTAVLLASGVTVTWA), 160-180 (ALILTVCLGAYFTFLQAGEYM), 195-215 (FFVATGFHGLHVLIGSSFLAI), and 237-257 (AWYWHFVDVVWICLYLCIYWW).

The protein belongs to the cytochrome c oxidase subunit 3 family. Component of the cytochrome c oxidase (complex IV, CIV), a multisubunit enzyme composed of a catalytic core of 3 subunits and several supernumerary subunits. The complex exists as a monomer or a dimer and forms supercomplexes (SCs) in the inner mitochondrial membrane with ubiquinol-cytochrome c oxidoreductase (cytochrome b-c1 complex, complex III, CIII).

The protein resides in the mitochondrion inner membrane. The enzyme catalyses 4 Fe(II)-[cytochrome c] + O2 + 8 H(+)(in) = 4 Fe(III)-[cytochrome c] + 2 H2O + 4 H(+)(out). Functionally, component of the cytochrome c oxidase, the last enzyme in the mitochondrial electron transport chain which drives oxidative phosphorylation. The respiratory chain contains 3 multisubunit complexes succinate dehydrogenase (complex II, CII), ubiquinol-cytochrome c oxidoreductase (cytochrome b-c1 complex, complex III, CIII) and cytochrome c oxidase (complex IV, CIV), that cooperate to transfer electrons derived from NADH and succinate to molecular oxygen, creating an electrochemical gradient over the inner membrane that drives transmembrane transport and the ATP synthase. Cytochrome c oxidase is the component of the respiratory chain that catalyzes the reduction of oxygen to water. Electrons originating from reduced cytochrome c in the intermembrane space (IMS) are transferred via the dinuclear copper A center (CU(A)) of subunit 2 and heme A of subunit 1 to the active site in subunit 1, a binuclear center (BNC) formed by heme A3 and copper B (CU(B)). The BNC reduces molecular oxygen to 2 water molecules using 4 electrons from cytochrome c in the IMS and 4 protons from the mitochondrial matrix. The polypeptide is Cytochrome c oxidase subunit 3 (COIII) (Lumbricus terrestris (Common earthworm)).